The primary structure comprises 123 residues: Large ribosomal subunit protein uL29 (123 aa).

Belongs to the universal ribosomal protein uL29 family.

This Babesia bovis protein is Large ribosomal subunit protein uL29 (RPL35).